The primary structure comprises 149 residues: D-aminoacyl-tRNA deacylase (149 aa).

The short motif at 137-138 is the Gly-cisPro motif, important for rejection of L-amino acids element; sequence GP.

This sequence belongs to the DTD family. As to quaternary structure, homodimer.

The protein localises to the cytoplasm. It carries out the reaction glycyl-tRNA(Ala) + H2O = tRNA(Ala) + glycine + H(+). The catalysed reaction is a D-aminoacyl-tRNA + H2O = a tRNA + a D-alpha-amino acid + H(+). Functionally, an aminoacyl-tRNA editing enzyme that deacylates mischarged D-aminoacyl-tRNAs. Also deacylates mischarged glycyl-tRNA(Ala), protecting cells against glycine mischarging by AlaRS. Acts via tRNA-based rather than protein-based catalysis; rejects L-amino acids rather than detecting D-amino acids in the active site. By recycling D-aminoacyl-tRNA to D-amino acids and free tRNA molecules, this enzyme counteracts the toxicity associated with the formation of D-aminoacyl-tRNA entities in vivo and helps enforce protein L-homochirality. This is D-aminoacyl-tRNA deacylase from Janthinobacterium sp. (strain Marseille) (Minibacterium massiliensis).